The sequence spans 467 residues: Glutamate--tRNA ligase (467 aa).

The short motif at 9-19 is the 'HIGH' region element; that stretch reads PSPTGYLHIGG. Positions 237 to 241 match the 'KMSKS' region motif; sequence KLSKR. Lys-240 contributes to the ATP binding site.

Belongs to the class-I aminoacyl-tRNA synthetase family. Glutamate--tRNA ligase type 1 subfamily. Monomer.

It localises to the cytoplasm. It carries out the reaction tRNA(Glu) + L-glutamate + ATP = L-glutamyl-tRNA(Glu) + AMP + diphosphate. In terms of biological role, catalyzes the attachment of glutamate to tRNA(Glu) in a two-step reaction: glutamate is first activated by ATP to form Glu-AMP and then transferred to the acceptor end of tRNA(Glu). This is Glutamate--tRNA ligase from Xanthomonas euvesicatoria pv. vesicatoria (strain 85-10) (Xanthomonas campestris pv. vesicatoria).